The chain runs to 1654 residues: Microtubule cross-linking factor 2 (1654 aa).

The tract at residues 1 to 188 (METPAGESSA…VAASSVGSSR (188 aa)) is disordered. Residues 55-66 (GSATACGTASSA) show a composition bias toward low complexity. Pro residues predominate over residues 102–113 (GTGPRPPPPPPS). Over residues 132 to 147 (LGLELALSSDAESAAG) the composition is skewed to low complexity. Residues 209–238 (PGGLVRELEELRSENDYLKDEIEELRAEML) are required for association with Golgi apparatus membrane. Coiled coils occupy residues 216-279 (LEEL…AERR), 308-349 (SMRL…LQTE), 448-546 (LKLV…YRSE), 816-843 (IKDL…ERQL), and 1079-1113 (SQEK…LQKA). The interval 348 to 379 (TELDRPREHSLKKRGTRSLGKTDKKPTAQEDS) is disordered. A compositionally biased stretch (basic and acidic residues) spans 1122–1145 (SDMEKQDNSWKEARSEKTHDKEGV). The segment at 1122–1146 (SDMEKQDNSWKEARSEKTHDKEGVS) is disordered. Residues Ser-1165 and Ser-1251 each carry the phosphoserine modification. Residues 1406 to 1505 (LVSVRSKQIS…HSGSTESVWK (100 aa)) form a KR-rich domain required for microtubules binding region. Disordered stretches follow at residues 1427-1450 (RPCC…LDST), 1537-1560 (PTTA…YHQP), and 1627-1654 (NTIR…AAPQ). Basic residues predominate over residues 1628–1638 (TIRHSPSKCRL).

It belongs to the MTCL family. As to quaternary structure, interacts with CLASP2. Interacts with CLASP1. The C-terminal SOGA 25 kDa form occurs as a monomer. In terms of processing, proteolytically cleaved into a C-terminal SOGA 25 kDa form that is detected in plasma. Proteolytically cleaved in primary hepatocytes into a C-terminal SOGA 80 kDa form. Phosphorylated during mitosis in a CDK1-dependent manner. Expressed in liver (at protein level).

The protein localises to the secreted. It localises to the cytoplasm. The protein resides in the cytoskeleton. Its subcellular location is the golgi apparatus membrane. It is found in the midbody. In terms of biological role, microtubule-associated factor that enables integration of the centrosomal and Golgi-associated microtubules on the Golgi membrane, supporting directional migration. Preferentially acts on the perinuclear microtubules accumulated around the Golgi. Associates with the Golgi membrane through the N-terminal coiled-coil region and directly binds microtubules through the C-terminal domain. Required for faithful chromosome segregation during mitosis. Regulates autophagy by playing a role in the reduction of glucose production in an adiponectin- and insulin-dependent manner. The chain is Microtubule cross-linking factor 2 (Mtcl2) from Mus musculus (Mouse).